Consider the following 944-residue polypeptide: MIYNLSFWRILRISIFIIFLFNFTYVCNIKYNVINKKNVSLVSDTLICREKRQKWWLWKTPSFLKRHSFSRIIKCCDKEQNNIGHFKKSICSLNYIPSFNLLLLLKKWEGLIKKKKNNHNFYEIAHNKITRNINSNWHLSGKGDINDYTKENDSNIYKDEEYNKNQYNDNKNDDTLNKDIVSIANSNLNNEMLHKYNIEQKNVRNFCILAHIDSGKSTLADRFLELTNTIKKKRMQDQFLDMMALERERGITIKLKAVRMNYKNYIFNLIDTPGHFDFYHEVKRSLNVCEGAILLIDGGKGIQAQTLNIFLEIKKHNIKIIPVINKIDLNTCIYDKICDDLVNKFDFKKEEILKISAKYGNNVENVFQRIITDIPYPPIKSNTFFRGVVFDSFYDQYKGVILIIKVLNGFLKKKQKIYFINSKKSYIIQEVGYLTPSMKPTDIIYQGDIAYISSNIRNFDDIEISETIINHDVVQINEQKKKIHINIKKSDFYNTLTNTDQHISNAINSDMDNPVSINFDNKENENLINIKETRCNPEYDLHYSDKKDVVMETNTIKEMSQIENSNIGTDKMHEKNEEFDEINIKDIAADKIDIAYPSVYCNIYSMNDKKCKELEVALNKLKLNDTSFSFKTDICETLGKGFKCGFNGLLHLNIIQERIKREYNVETIITAPSVNYLVKVKEKYIDKKLKAKLIEKNFDINSINIDVGNSESVKKEANETKTQNGMFFMTSNSNDIPQKNYIEHIYEPYVKTNIITPEEYQKHIMNECFKRRGIFIKKEHINDQIIFTFDMPLSEILINFLDEIKSSTKGFGSMSYENYIIYKQSDLYKIHIYINNKCIESLTFIAHKLNYQEKSKTLVSKLKSLINPHQFLIVIQAAIGSNVFVSEKIKPLKKNVTAKCYGGDITRRRKLLEKQNEGKKKMFTIGKVKLPPGIFTKLFNIKDK.

The tr-type G domain occupies 201–379 (KNVRNFCILA…IITDIPYPPI (179 aa)). GTP-binding positions include 210–217 (AHIDSGKS), 271–275 (DTPGH), and 325–328 (NKID).

Belongs to the TRAFAC class translation factor GTPase superfamily. Classic translation factor GTPase family. LepA subfamily.

The protein resides in the mitochondrion inner membrane. The catalysed reaction is GTP + H2O = GDP + phosphate + H(+). Promotes mitochondrial protein synthesis. May act as a fidelity factor of the translation reaction, by catalyzing a one-codon backward translocation of tRNAs on improperly translocated ribosomes. Binds to mitochondrial ribosomes in a GTP-dependent manner. The protein is Translation factor GUF1 homolog, mitochondrial of Plasmodium yoelii yoelii.